Reading from the N-terminus, the 985-residue chain is Ankyrin repeat domain-containing protein 24 (985 aa).

5 ANK repeats span residues 52 to 81, 85 to 114, 118 to 147, 151 to 180, and 184 to 213; these read EGKS…DVMS, AGYN…VVDI, SGWT…HMNP, SGAT…ATND, and QGRT…QLSI. Disordered stretches follow at residues 243–293, 311–360, 386–412, 476–503, and 594–614; these read RSSP…DRDA, IRGL…LGRE, QDEE…SAEE, YTEA…TAYQ, and DNAE…NPGM. A coiled-coil region spans residues 291-488; that stretch reads RDAYEEIVRL…AMHSQQQQQE (198 aa). Composition is skewed to basic and acidic residues over residues 311 to 326 and 349 to 360; these read IRGL…KEPL and EKQEEKESLGRE.

In terms of assembly, homodimer. Interacts (via C-terminal domain) with TRIOBP (via C-terminal domain) isoform 4; recruits TRIOBP isoform 4 to stereocilia rootlets. As to expression, expressed in vestibular hair bundles.

The protein resides in the cell membrane. It is found in the cell projection. Its subcellular location is the stereocilium. In terms of biological role, component of the stereocilia rootlet in hair cells of inner ear. Bridges the apical plasma membrane with the lower rootlet and maintains normal distribution of TRIOBP, thereby reinforcing stereocilia insertion points and organizing rootlets for hearing with long-term resilience. The protein is Ankyrin repeat domain-containing protein 24 (Ankrd24) of Mus musculus (Mouse).